The sequence spans 560 residues: Trafficking protein particle complex II-specific subunit 65 (560 aa).

A disordered region spans residues 164-193 (SSKNTNNHLEKNNRATHRVSSKNSEVHEAD). Phosphoserine is present on residues Ser-393 and Ser-398.

Part of the multisubunit TRAPP (transport protein particle) II complex composed of BET3, BET5, TRS20, TRS23, TRS31, TRS33, TRS65, TRS120 and TRS130. Interacts directly with TRS120 and TRS130.

It is found in the cytoplasm. The protein resides in the golgi apparatus. The protein localises to the cis-Golgi network. It functions in the pathway glycan metabolism; beta-glucan biosynthesis. Its function is as follows. Specific subunit of the TRAPP II complex, a highly conserved vesicle tethering complex that functions in the late Golgi as a guanine nucleotide exchanger (GEF) for the Golgi YPT1 GTPase. TRS65 plays a role in the YPT GEF activity of TRAPP II in concert with the two other TRAPP II-specific subunits TRS120 and TRS130. Involved in cell wall (1--&gt;6)-beta-glucan synthesis. This chain is Trafficking protein particle complex II-specific subunit 65 (TRS65), found in Saccharomyces cerevisiae (strain ATCC 204508 / S288c) (Baker's yeast).